Reading from the N-terminus, the 1369-residue chain is Microtubule-associated tumor suppressor candidate 2 (1369 aa).

Disordered regions lie at residues 180 to 262 (ASSS…TQTV), 374 to 442 (GRGN…FIPN), 477 to 509 (GENKTEVPEPLDPQSGRSEARESKEVTTSVAEN), 582 to 627 (NTSP…EERT), 791 to 839 (RSSA…LRPP), 861 to 992 (SSVS…QARE), and 1331 to 1369 (WKLQTGDPTSPIKLSPTSPVYRGSSSGPSSPARVSTTPR). Composition is skewed to polar residues over residues 246 to 262 (PSTSESKQSTPSETQTV) and 392 to 401 (LHTTPKQGSA). The interval 641-980 (RPKIITYIRR…PKQRTAAARN (340 aa)) is mediates interaction with MAPRE1. Residues 801-890 (GPITTATSLY…TRSTFGNEEQ (90 aa)) form a sufficient for interaction with KIF2C region. Positions 801-1150 (GPITTATSLY…HDAALLEMEN (350 aa)) are localization to the growing distal tip of microtubules. Residues 804–814 (TTATSLYSSDP) are compositionally biased toward polar residues. A compositionally biased stretch (low complexity) spans 821–834 (ASSSNAAKSNLPKS). The segment covering 937 to 947 (TKKDAQKDQDT) has biased composition (basic and acidic residues). Residues 991-1335 (REAERQLVLR…NEELLWKLQT (345 aa)) are a coiled coil. Over residues 1348–1369 (SPVYRGSSSGPSSPARVSTTPR) the composition is skewed to low complexity.

The protein in the C-terminal section; belongs to the MTUS1 family. Homodimer. Interacts with KIF2C and MAPRE1; the interaction is direct and probably targets MTUS2 and KIF2C to microtubules. In terms of tissue distribution, detected in embryonic stem cells differentiating to cardiomyocytes.

The protein resides in the cytoplasm. It localises to the cytoskeleton. Binds microtubules. Together with MAPRE1 may target the microtubule depolymerase KIF2C to the plus-end of microtubules. May regulate the dynamics of microtubules at their growing distal tip. The polypeptide is Microtubule-associated tumor suppressor candidate 2 (MTUS2) (Homo sapiens (Human)).